The primary structure comprises 181 residues: Large ribosomal subunit protein uL10 (181 aa).

The protein belongs to the universal ribosomal protein uL10 family. Part of the ribosomal stalk of the 50S ribosomal subunit. The N-terminus interacts with L11 and the large rRNA to form the base of the stalk. The C-terminus forms an elongated spine to which L12 dimers bind in a sequential fashion forming a multimeric L10(L12)X complex.

In terms of biological role, forms part of the ribosomal stalk, playing a central role in the interaction of the ribosome with GTP-bound translation factors. This chain is Large ribosomal subunit protein uL10, found in Trichormus variabilis (strain ATCC 29413 / PCC 7937) (Anabaena variabilis).